The sequence spans 188 residues: dITP/XTP pyrophosphatase (188 aa).

7 to 12 (TGNIGK) is a binding site for substrate. Residues Glu-36 and Asp-65 each coordinate Mg(2+). Asp-65 acts as the Proton acceptor in catalysis. Substrate-binding positions include Ser-66, 141 to 144 (FGYD), Lys-164, and 169 to 170 (HR).

This sequence belongs to the HAM1 NTPase family. As to quaternary structure, homodimer. The cofactor is Mg(2+).

The catalysed reaction is XTP + H2O = XMP + diphosphate + H(+). It carries out the reaction dITP + H2O = dIMP + diphosphate + H(+). The enzyme catalyses ITP + H2O = IMP + diphosphate + H(+). Pyrophosphatase that catalyzes the hydrolysis of nucleoside triphosphates to their monophosphate derivatives, with a high preference for the non-canonical purine nucleotides XTP (xanthosine triphosphate), dITP (deoxyinosine triphosphate) and ITP. Seems to function as a house-cleaning enzyme that removes non-canonical purine nucleotides from the nucleotide pool, thus preventing their incorporation into DNA/RNA and avoiding chromosomal lesions. The protein is dITP/XTP pyrophosphatase of Methanopyrus kandleri (strain AV19 / DSM 6324 / JCM 9639 / NBRC 100938).